The primary structure comprises 207 residues: Superoxide dismutase [Mn] (207 aa).

The Mn(2+) site is built by His28, His76, Asp160, and His164.

This sequence belongs to the iron/manganese superoxide dismutase family. Mn(2+) is required as a cofactor.

The enzyme catalyses 2 superoxide + 2 H(+) = H2O2 + O2. Its function is as follows. Destroys superoxide anion radicals which are normally produced within the cells and which are toxic to biological systems. This Mycobacterium lepraemurium protein is Superoxide dismutase [Mn] (sodA).